We begin with the raw amino-acid sequence, 245 residues long: 1-(5-phosphoribosyl)-5-[(5-phosphoribosylamino)methylideneamino] imidazole-4-carboxamide isomerase (245 aa).

The active-site Proton acceptor is the D7. The Proton donor role is filled by D129.

This sequence belongs to the HisA/HisF family.

Its subcellular location is the cytoplasm. It catalyses the reaction 1-(5-phospho-beta-D-ribosyl)-5-[(5-phospho-beta-D-ribosylamino)methylideneamino]imidazole-4-carboxamide = 5-[(5-phospho-1-deoxy-D-ribulos-1-ylimino)methylamino]-1-(5-phospho-beta-D-ribosyl)imidazole-4-carboxamide. Its pathway is amino-acid biosynthesis; L-histidine biosynthesis; L-histidine from 5-phospho-alpha-D-ribose 1-diphosphate: step 4/9. This Escherichia coli (strain SMS-3-5 / SECEC) protein is 1-(5-phosphoribosyl)-5-[(5-phosphoribosylamino)methylideneamino] imidazole-4-carboxamide isomerase.